The following is a 419-amino-acid chain: eIF5-mimic protein 1 (419 aa).

Positions 1 to 22 (MNKHQKPVLTGQRFKTRKRDEK) are disordered. Position 117 is an N6-acetyllysine (K117). Positions 248–415 (VQQSLGTRKE…QNAEEESESE (168 aa)) constitute a W2 domain. Phosphoserine occurs at positions 412, 414, and 419.

The protein belongs to the BZW family. Interacts with EIF3E, EIF2S2 and EIF3C. Expressed at high levels in heart, and at lower levels in skeletal muscle, spleen and lung. Expressed at low levels in brain regions where nascent and immature neurons are present.

The protein resides in the cytoplasm. Functionally, translation initiation regulator which represses non-AUG initiated translation and repeat-associated non-AUG (RAN) initiated translation by acting as a competitive inhibitor of eukaryotic translation initiation factor 5 (EIF5) function. Increases the accuracy of translation initiation by impeding EIF5-dependent translation from non-AUG codons by competing with it for interaction with EIF2S2 within the 43S pre-initiation complex (PIC) in an EIF3C-binding dependent manner. This is eIF5-mimic protein 1 (Bzw2) from Rattus norvegicus (Rat).